We begin with the raw amino-acid sequence, 220 residues long: U1 small nuclear ribonucleoprotein C (220 aa).

A Matrin-type zinc finger spans residues 4-36 (YYCDYCDIYLTHDSMNARKAHNSGRNHVANVRD). Composition is skewed to pro residues over residues 88-130 (PGPP…PFLP) and 147-165 (PPFP…PFRP). Residues 88 to 220 (PGPPPPGAFP…HPDRLRMLGQ (133 aa)) are disordered. A compositionally biased stretch (low complexity) spans 166–200 (PMGMGMPPAPAQAQAQGSPMGMPQQGQQGTFTPTQ). Basic and acidic residues predominate over residues 211–220 (HPDRLRMLGQ).

It belongs to the U1 small nuclear ribonucleoprotein C family. As to quaternary structure, U1 snRNP is composed of the 7 core Sm proteins B/B', D1, D2, D3, E, F and G that assemble in a heptameric protein ring on the Sm site of the small nuclear RNA to form the core snRNP, and at least 3 U1 snRNP-specific proteins U1-70K, U1-A and U1-C. U1-C interacts with U1 snRNA and the 5' splice-site region of the pre-mRNA.

It is found in the nucleus. Component of the spliceosomal U1 snRNP, which is essential for recognition of the pre-mRNA 5' splice-site and the subsequent assembly of the spliceosome. U1-C is directly involved in initial 5' splice-site recognition for both constitutive and regulated alternative splicing. The interaction with the 5' splice-site seems to precede base-pairing between the pre-mRNA and the U1 snRNA. Stimulates commitment or early (E) complex formation by stabilizing the base pairing of the 5' end of the U1 snRNA and the 5' splice-site region. The polypeptide is U1 small nuclear ribonucleoprotein C (Cryptococcus neoformans var. neoformans serotype D (strain JEC21 / ATCC MYA-565) (Filobasidiella neoformans)).